A 122-amino-acid polypeptide reads, in one-letter code: Large ribosomal subunit protein uL14c (122 aa).

Belongs to the universal ribosomal protein uL14 family. As to quaternary structure, part of the 50S ribosomal subunit.

It is found in the plastid. Its subcellular location is the chloroplast. Functionally, binds to 23S rRNA. The protein is Large ribosomal subunit protein uL14c of Fagopyrum esculentum subsp. ancestrale (Wild buckwheat).